A 129-amino-acid polypeptide reads, in one-letter code: MARVKRSVNAHKKRRSVLKASKGYRGQRSRLYRKAKEQQLHSLNYAYRDRRARKGEFRKLWISRINAAARANDITYNRLIQGLKAAGVEVDRKNLADIAITDPAAFTALVDVARAALPEDVSAPSGEAA.

Basic residues predominate over residues 1-17 (MARVKRSVNAHKKRRSV). Residues 1 to 29 (MARVKRSVNAHKKRRSVLKASKGYRGQRS) form a disordered region.

The protein belongs to the bacterial ribosomal protein bL20 family.

In terms of biological role, binds directly to 23S ribosomal RNA and is necessary for the in vitro assembly process of the 50S ribosomal subunit. It is not involved in the protein synthesizing functions of that subunit. The protein is Large ribosomal subunit protein bL20 of Mycobacterium ulcerans (strain Agy99).